The chain runs to 333 residues: Protein VTE6, chloroplastic (333 aa).

A chloroplast-targeting transit peptide spans 1–65; that stretch reads MATISSTLLL…SRADGATAAA (65 aa). 6 helical membrane passes run 94 to 114, 126 to 146, 171 to 191, 248 to 268, 274 to 294, and 307 to 327; these read LLIF…SGIA, AYGS…TAAT, VIGS…QVGG, TLAG…LGQI, AVCV…GASF, and VVNV…QQFI.

Belongs to the TMEM19 family.

The protein localises to the plastid. Its subcellular location is the chloroplast membrane. The enzyme catalyses phytyl phosphate + a ribonucleoside 5'-triphosphate = phytyl diphosphate + a ribonucleoside 5'-diphosphate. The catalysed reaction is phytyl phosphate + CTP = phytyl diphosphate + CDP. The protein operates within cofactor biosynthesis; tocopherol biosynthesis. In terms of biological role, phytyl-phosphate kinase catalyzing the conversion of phytyl-monophosphate to phytyl-diphosphate. Involved in the activation and reutilization of phytol from chlorophyll degradation in plant metabolism, including tocopherol (vitamin E) biosynthesis. Involved in the biosynthesis of phylloquinone (vitamin K), which is required for the photosystem I (PSI) complex stability. This Arabidopsis thaliana (Mouse-ear cress) protein is Protein VTE6, chloroplastic.